We begin with the raw amino-acid sequence, 239 residues long: LexA repressor (239 aa).

A DNA-binding region (H-T-H motif) is located at residues 26 to 46; the sequence is FDEMKDALDLASKSGIHRLIT. The interval 80–108 is disordered; that stretch reads RRGFSPSVIEGSLGKPQPAAAPAPAKPVA. Residues serine 159 and lysine 197 each act as for autocatalytic cleavage activity in the active site.

The protein belongs to the peptidase S24 family. In terms of assembly, homodimer.

It carries out the reaction Hydrolysis of Ala-|-Gly bond in repressor LexA.. In terms of biological role, represses a number of genes involved in the response to DNA damage (SOS response), including recA and lexA. In the presence of single-stranded DNA, RecA interacts with LexA causing an autocatalytic cleavage which disrupts the DNA-binding part of LexA, leading to derepression of the SOS regulon and eventually DNA repair. The sequence is that of LexA repressor from Rhizobium leguminosarum bv. trifolii (strain WSM2304).